A 348-amino-acid chain; its full sequence is Ribosomal RNA small subunit methyltransferase C (348 aa).

This sequence belongs to the methyltransferase superfamily. RsmC family. Monomer.

It is found in the cytoplasm. It catalyses the reaction guanosine(1207) in 16S rRNA + S-adenosyl-L-methionine = N(2)-methylguanosine(1207) in 16S rRNA + S-adenosyl-L-homocysteine + H(+). Functionally, specifically methylates the guanine in position 1207 of 16S rRNA in the 30S particle. The polypeptide is Ribosomal RNA small subunit methyltransferase C (Pectobacterium atrosepticum (strain SCRI 1043 / ATCC BAA-672) (Erwinia carotovora subsp. atroseptica)).